Here is a 270-residue protein sequence, read N- to C-terminus: Tryptophan synthase alpha chain (270 aa).

Residues glutamate 60 and aspartate 71 each act as proton acceptor in the active site.

This sequence belongs to the TrpA family. In terms of assembly, tetramer of two alpha and two beta chains.

The catalysed reaction is (1S,2R)-1-C-(indol-3-yl)glycerol 3-phosphate + L-serine = D-glyceraldehyde 3-phosphate + L-tryptophan + H2O. The protein operates within amino-acid biosynthesis; L-tryptophan biosynthesis; L-tryptophan from chorismate: step 5/5. Its function is as follows. The alpha subunit is responsible for the aldol cleavage of indoleglycerol phosphate to indole and glyceraldehyde 3-phosphate. The polypeptide is Tryptophan synthase alpha chain (Deinococcus radiodurans (strain ATCC 13939 / DSM 20539 / JCM 16871 / CCUG 27074 / LMG 4051 / NBRC 15346 / NCIMB 9279 / VKM B-1422 / R1)).